A 206-amino-acid polypeptide reads, in one-letter code: Thymidylate kinase (206 aa).

10–17 contributes to the ATP binding site; that stretch reads GIDGAGKS.

It belongs to the thymidylate kinase family.

It catalyses the reaction dTMP + ATP = dTDP + ADP. Functionally, phosphorylation of dTMP to form dTDP in both de novo and salvage pathways of dTTP synthesis. This chain is Thymidylate kinase, found in Neisseria meningitidis serogroup C / serotype 2a (strain ATCC 700532 / DSM 15464 / FAM18).